The sequence spans 147 residues: Fibromodulin (147 aa).

6 LRR repeats span residues 1-15, 16-37, 40-61, 63-84, 85-105, and 108-128; these read LDHN…PLPR, SLRE…ALEG, NLTA…MRGL, SLIL…LPSA, LEQL…YFRG, and KLLY…ASNT. N-linked (GlcNAc...) asparagine glycosylation occurs at asparagine 5. Asparagine 40 carries an N-linked (GlcNAc...) asparagine glycan. N-linked (GlcNAc...) asparagine glycosylation occurs at asparagine 130. One copy of the LRR 7 repeat lies at 133–147; the sequence is SLLELDLSYNQLQKI.

This sequence belongs to the small leucine-rich proteoglycan (SLRP) family. SLRP class II subfamily. In terms of assembly, binds to type I and type II collagen. Binds keratan sulfate chains. Post-translationally, sulfated on tyrosine residues. In terms of processing, the N-terminus is blocked by a pyrrolidone carboxylic acid generated by post-translational modification of N-terminal glutamine.

It localises to the secreted. The protein localises to the extracellular space. It is found in the extracellular matrix. In terms of biological role, affects the rate of fibrils formation. May have a primary role in collagen fibrillogenesis. The polypeptide is Fibromodulin (FMOD) (Oryctolagus cuniculus (Rabbit)).